The sequence spans 178 residues: Large ribosomal subunit protein uL6 (178 aa).

It belongs to the universal ribosomal protein uL6 family. In terms of assembly, part of the 50S ribosomal subunit.

Functionally, this protein binds to the 23S rRNA, and is important in its secondary structure. It is located near the subunit interface in the base of the L7/L12 stalk, and near the tRNA binding site of the peptidyltransferase center. The chain is Large ribosomal subunit protein uL6 from Tropheryma whipplei (strain TW08/27) (Whipple's bacillus).